We begin with the raw amino-acid sequence, 2335 residues long: Histone-lysine N-methyltransferase ATXR3 (2335 aa).

Disordered stretches follow at residues 30 to 142 (NESK…FKDE), 332 to 355 (STGNRLKRHGAEPDSIERKHSYAD), 371 to 556 (CSRS…SSSK), and 902 to 961 (DQVP…KTDT). Polar residues-rich tracts occupy residues 31 to 46 (ESKTAATTENGHTSIA) and 53 to 62 (QPANKPSASS). The segment covering 65–84 (VKKKRIVKVIRKVVKRRPKQ) has biased composition (basic residues). Residues 67 to 74 (KKRIVKVI) carry the Nuclear localization signal 1 motif. Polar residues predominate over residues 97–112 (PPSQVVQLPAESQLQI). 3 stretches are compositionally biased toward basic and acidic residues: residues 340–353 (HGAEPDSIERKHSY), 371–390 (CSRSLHSDHYSQHSAERLYR), and 430–452 (WSPHDRSRYHENRDRSPYARERS). Basic residues predominate over residues 461 to 475 (HARKRSPRDRRHHDY). 3 stretches are compositionally biased toward basic and acidic residues: residues 485 to 498 (SPHDRSRPSDRRDY), 507 to 548 (QSDR…ESNG), and 910 to 921 (PRAKVRSKERCP). Residues 527 to 534 (ERRDCQTG) carry the Nuclear localization signal 2 motif. The span at 922–932 (SRPARPSPASS) shows a compositional bias: low complexity. Positions 941-961 (SHSQSTASTGQDSQGLWKTDT) are enriched in polar residues. Positions 1382–1389 (ARRSSAIL) match the Nuclear localization signal 3 motif. The disordered stretch occupies residues 1532–1572 (NRKSFSSESDTSSELSDNGKSDNYSSASASESESDIRSEGR). Over residues 1535-1547 (SFSSESDTSSELS) the composition is skewed to low complexity. The SET domain maps to 1765–1904 (KEIESRSDDK…YGEEITFDYN (140 aa)). Cys1868 is a Zn(2+) binding site. Tyr1903 is a binding site for S-adenosyl-L-methionine. One can recognise a Post-SET domain in the interval 1914 to 1930 (EASVCLCGSQVCRGSYL). Residues Cys1918, Cys1920, and Cys1925 each coordinate Zn(2+).

It belongs to the class V-like SAM-binding methyltransferase superfamily. Histone-lysine methyltransferase family. TRX/MLL subfamily. In terms of tissue distribution, expressed in roots, leaves, stems and inflorescences.

The protein localises to the nucleus. It catalyses the reaction L-lysyl(4)-[histone H3] + 3 S-adenosyl-L-methionine = N(6),N(6),N(6)-trimethyl-L-lysyl(4)-[histone H3] + 3 S-adenosyl-L-homocysteine + 3 H(+). Histone methyltransferase specifically required for trimethylation of 'Lys-4' of histone H3 (H3K4me3) and is crucial for both sporophyte and gametophyte development. Function as a diurnal 'writer' to counteract the nocturne 'eraser' demethylase activity of JMJ14 thus orchestrating the circadian rhythm of histone modifications (e.g. H3K4me3) and modulating the rhythmic expression of diurnal target genes; this mechanism relies also on the circadian clock oscillators CCA1 and LHY. The sequence is that of Histone-lysine N-methyltransferase ATXR3 from Arabidopsis thaliana (Mouse-ear cress).